The sequence spans 328 residues: Malate dehydrogenase (328 aa).

11-17 (GAAGQIG) contacts NAD(+). The substrate site is built by Arg-94 and Arg-100. NAD(+) is bound by residues Asn-107, Gln-114, and 131–133 (VGN). Substrate contacts are provided by Asn-133 and Arg-164. His-189 serves as the catalytic Proton acceptor.

The protein belongs to the LDH/MDH superfamily. MDH type 2 family.

The enzyme catalyses (S)-malate + NAD(+) = oxaloacetate + NADH + H(+). In terms of biological role, catalyzes the reversible oxidation of malate to oxaloacetate. The chain is Malate dehydrogenase from Xylella fastidiosa (strain M12).